Reading from the N-terminus, the 85-residue chain is Phycobilisome 9.7 kDa linker polypeptide, phycocyanin-associated, rod (85 aa).

Residues 16–74 (NRVFVYEVEGLRQNEQTDNNRYQIRNSSTIEIQVPYSRMNEEDRRITRLGGRIVNIRPA) enclose the CpcD-like domain.

This sequence belongs to the phycobilisome linker protein family.

It is found in the cellular thylakoid membrane. In terms of biological role, rod linker protein, associated with phycocyanin. Linker polypeptides determine the state of aggregation and the location of the disk-shaped phycobiliprotein units within the phycobilisome and modulate their spectroscopic properties in order to mediate a directed and optimal energy transfer. This Microchaete diplosiphon (Fremyella diplosiphon) protein is Phycobilisome 9.7 kDa linker polypeptide, phycocyanin-associated, rod (cpcD2).